Reading from the N-terminus, the 504-residue chain is Maturase K (504 aa).

It belongs to the intron maturase 2 family. MatK subfamily.

Its subcellular location is the plastid. The protein localises to the chloroplast. Its function is as follows. Usually encoded in the trnK tRNA gene intron. Probably assists in splicing its own and other chloroplast group II introns. In Quercus petraea (Durmast oak), this protein is Maturase K.